Here is a 339-residue protein sequence, read N- to C-terminus: Anthranilate phosphoribosyltransferase (339 aa).

Residues Gly-82, 85 to 86, Thr-90, 92 to 95, 110 to 118, and Ser-122 contribute to the 5-phospho-alpha-D-ribose 1-diphosphate site; these read GD, NIST, and KHGNRSASG. Gly-82 contacts anthranilate. Residue Ser-94 participates in Mg(2+) binding. Asn-113 is a binding site for anthranilate. Arg-168 is an anthranilate binding site. Mg(2+) is bound by residues Asp-226 and Glu-227.

Belongs to the anthranilate phosphoribosyltransferase family. As to quaternary structure, homodimer. The cofactor is Mg(2+).

The catalysed reaction is N-(5-phospho-beta-D-ribosyl)anthranilate + diphosphate = 5-phospho-alpha-D-ribose 1-diphosphate + anthranilate. It participates in amino-acid biosynthesis; L-tryptophan biosynthesis; L-tryptophan from chorismate: step 2/5. Functionally, catalyzes the transfer of the phosphoribosyl group of 5-phosphorylribose-1-pyrophosphate (PRPP) to anthranilate to yield N-(5'-phosphoribosyl)-anthranilate (PRA). The chain is Anthranilate phosphoribosyltransferase from Methanosphaerula palustris (strain ATCC BAA-1556 / DSM 19958 / E1-9c).